A 155-amino-acid polypeptide reads, in one-letter code: Transcriptional repressor NrdR (155 aa).

Residues 1-11 (MECPNCHQNAS) are compositionally biased toward polar residues. The interval 1-22 (MECPNCHQNASRVIDSRPSDEN) is disordered. A zinc finger lies at 3–34 (CPNCHQNASRVIDSRPSDENRAIRRRRECENC). Positions 49–139 (LLVIKNDGTR…IYREFKDMSS (91 aa)) constitute an ATP-cone domain.

The protein belongs to the NrdR family. The cofactor is Zn(2+).

Its function is as follows. Negatively regulates transcription of bacterial ribonucleotide reductase nrd genes and operons by binding to NrdR-boxes. In Lactobacillus helveticus (strain DPC 4571), this protein is Transcriptional repressor NrdR.